The sequence spans 342 residues: Autoinducer 2 import system permease protein LsrC (342 aa).

At 1–13 (MLKFIQNNREITA) the chain is on the periplasmic side. Residues 14–34 (LLAVVLLFVLPGFLDRQYLSV) traverse the membrane as a helical segment. Residues 35-38 (QTLT) lie on the Cytoplasmic side of the membrane. A helical membrane pass occupies residues 39 to 59 (MVYSSAQILILLAMGATLVML). Topologically, residues 60–69 (TRNIDVSVGS) are periplasmic. A helical membrane pass occupies residues 70–90 (ITGMCAVLLGMLLNAGYSLPV). Residues 91–92 (AC) are Cytoplasmic-facing. A helical membrane pass occupies residues 93-113 (VATLLLGLLAGFFNGALVAWL). Position 114 (Lys-114) is a topological domain, periplasmic. The chain crosses the membrane as a helical span at residues 115-135 (IPAIVATLGTLGLYRGIMLLW). The Cytoplasmic portion of the chain corresponds to 136–154 (TGGKWIEGLPAELKQLSAP). The chain crosses the membrane as a helical span at residues 155–175 (LLLGISAIGWLTIILVAFMAW). The Periplasmic segment spans residues 176–212 (LLAKTAFGRSFYATGDNLQGARQLGVRTEAIRIVAFS). A helical membrane pass occupies residues 213–233 (LNGCMAALAGIVFASQIGFIL). At 234–251 (NQTGTGLEMKAIAACVLG) the chain is on the cytoplasmic side. A helical membrane pass occupies residues 252 to 272 (GISLLGGSGAIIGAVLGAWFL). Residues 273–283 (TQIDSVLVLLR) are Periplasmic-facing. A helical transmembrane segment spans residues 284–304 (IPAWWNDFIAGLVLLAVLVFD). Over 305–342 (GRLRCALERNLRRQKYARFMTPPPSVKPASSGKKREAA) the chain is Cytoplasmic.

The protein belongs to the binding-protein-dependent transport system permease family. AraH/RbsC subfamily. As to quaternary structure, the complex is composed of two ATP-binding proteins (LsrA), two transmembrane proteins (LsrC and LsrD) and a solute-binding protein (LsrB).

The protein localises to the cell inner membrane. In terms of biological role, part of the ABC transporter complex LsrABCD involved in autoinducer 2 (AI-2) import. Probably responsible for the translocation of the substrate across the membrane. The protein is Autoinducer 2 import system permease protein LsrC (lsrC) of Shigella flexneri.